The chain runs to 205 residues: Protease (205 aa).

Catalysis depends on residues His-55, Asp-72, and Cys-122.

This sequence belongs to the peptidase C5 family. In terms of assembly, interacts with protease cofactor pVI-C; this interaction is necessary for protease activation.

It is found in the virion. Its subcellular location is the host nucleus. The catalysed reaction is Cleaves proteins of the adenovirus and its host cell at two consensus sites: -Yaa-Xaa-Gly-Gly-|-Xaa- and -Yaa-Xaa-Gly-Xaa-|-Gly- (in which Yaa is Met, Ile or Leu, and Xaa is any amino acid).. Its activity is regulated as follows. Requires DNA and protease cofactor for maximal activation. Inside nascent virions, becomes partially activated by binding to the viral DNA, allowing it to cleave the cofactor that binds to the protease and fully activates it. Actin, like the viral protease cofactor, seems to act as a cofactor in the cleavage of cytokeratin 18 and of actin itself. Functionally, cleaves viral precursor proteins (pTP, pIIIa, pVI, pVII, pVIII, and pX) inside newly assembled particles giving rise to mature virions. Protease complexed to its cofactor slides along the viral DNA to specifically locate and cleave the viral precursors. Mature virions have a weakened organization compared to the unmature virions, thereby facilitating subsequent uncoating. Without maturation, the particle lacks infectivity and is unable to uncoat. Late in adenovirus infection, in the cytoplasm, may participate in the cytoskeleton destruction. Cleaves host cell cytoskeletal keratins K7 and K18. This is Protease from Galliformes (FAdV-8).